The sequence spans 421 residues: Eukaryotic translation initiation factor 3 subunit E (421 aa).

The PCI domain maps to 215-394; sequence FFQNDTKGKD…STVILNHPSV (180 aa).

Belongs to the eIF-3 subunit E family. In terms of assembly, component of the eukaryotic translation initiation factor 3 (eIF-3) complex.

It is found in the cytoplasm. Its function is as follows. Component of the eukaryotic translation initiation factor 3 (eIF-3) complex, which is involved in protein synthesis of a specialized repertoire of mRNAs and, together with other initiation factors, stimulates binding of mRNA and methionyl-tRNAi to the 40S ribosome. The eIF-3 complex specifically targets and initiates translation of a subset of mRNAs involved in cell proliferation. This is Eukaryotic translation initiation factor 3 subunit E from Yarrowia lipolytica (strain CLIB 122 / E 150) (Yeast).